An 882-amino-acid chain; its full sequence is Translation initiation factor IF-2 (882 aa).

Residues 50-299 (SFKSANTTKP…KERPLPETLV (250 aa)) form a disordered region. Composition is skewed to basic and acidic residues over residues 60–71 (STEKDSKNSSRK) and 84–96 (RRRD…DNRH). A compositionally biased stretch (basic residues) spans 97 to 108 (GNNKRRNNKFKK). Composition is skewed to basic and acidic residues over residues 109–133 (QQND…DLLN), 169–183 (KKVE…EKLE), 232–242 (QKEETKPTRKK), and 250–263 (EVPD…EHSD). Positions 264-277 (KARRRRNKKNKRIN) are enriched in basic residues. Over residues 278-294 (QSKEIKKQPTQRKERPL) the composition is skewed to basic and acidic residues. The region spanning 383–552 (KRPPVVTIMG…LLQADVMELK (170 aa)) is the tr-type G domain. Positions 392–399 (GHVDHGKT) are G1. 392–399 (GHVDHGKT) is a GTP binding site. The interval 417–421 (GITQK) is G2. Residues 438 to 441 (DTPG) are G3. GTP-binding positions include 438–442 (DTPGH) and 492–495 (NKID). A G4 region spans residues 492–495 (NKID). The segment at 528 to 530 (SAK) is G5.

This sequence belongs to the TRAFAC class translation factor GTPase superfamily. Classic translation factor GTPase family. IF-2 subfamily.

The protein resides in the cytoplasm. Its function is as follows. One of the essential components for the initiation of protein synthesis. Protects formylmethionyl-tRNA from spontaneous hydrolysis and promotes its binding to the 30S ribosomal subunits. Also involved in the hydrolysis of GTP during the formation of the 70S ribosomal complex. This is Translation initiation factor IF-2 from Lactobacillus gasseri (strain ATCC 33323 / DSM 20243 / BCRC 14619 / CIP 102991 / JCM 1131 / KCTC 3163 / NCIMB 11718 / NCTC 13722 / AM63).